The following is a 121-amino-acid chain: Large ribosomal subunit protein uL18 (121 aa).

This sequence belongs to the universal ribosomal protein uL18 family. Part of the 50S ribosomal subunit; part of the 5S rRNA/L5/L18/L25 subcomplex. Contacts the 5S and 23S rRNAs.

This is one of the proteins that bind and probably mediate the attachment of the 5S RNA into the large ribosomal subunit, where it forms part of the central protuberance. The sequence is that of Large ribosomal subunit protein uL18 from Streptococcus thermophilus (strain CNRZ 1066).